The primary structure comprises 362 residues: Putative lipoprotein YdaJ (362 aa).

An N-terminal signal peptide occupies residues 1-20 (MRHVLIAVILFFLSIGLSAG). Cys-21 is lipidated: N-palmitoyl cysteine. Residue Cys-21 is the site of S-diacylglycerol cysteine attachment.

Its subcellular location is the cell membrane. This chain is Putative lipoprotein YdaJ (ydaJ), found in Bacillus subtilis (strain 168).